The following is a 416-amino-acid chain: UV excision repair protein RAD23 homolog B (416 aa).

One can recognise a Ubiquitin-like domain in the interval 1 to 79 (MQVTLKTLQQ…VVVMVTKPKA (79 aa)). Positions 83-111 (AVPATTQPSSTPSPTAVSSSPAVAAAQAP) are enriched in low complexity. Residues 83-175 (AVPATTQPSS…STPGDSSRSN (93 aa)) are disordered. Pro residues predominate over residues 112 to 121 (APTPALPPTS). The span at 122–143 (TPASTAPASTTASSEPAPAGAT) shows a compositional bias: low complexity. At threonine 155 the chain carries Phosphothreonine. Phosphoserine is present on residues serine 160 and serine 174. Threonine 186 bears the Phosphothreonine mark. The region spanning 188–228 (QSYENMVTEIMSMGYEREQVIAALRASFNNPDRAVEYLLMG) is the UBA 1 domain. Serine 199 carries the post-translational modification Phosphoserine. Tyrosine 202 bears the Phosphotyrosine mark. The region spanning 274-317 (HPLEFLRNQPQFQQMRQIIQQNPSLLPALLQQIGRENPQLLQQI) is the STI1 domain. The tract at residues 333 to 356 (QEAGSQGGGGGGGGGGGGGGGGGI) is disordered. Residues 337-356 (SQGGGGGGGGGGGGGGGGGI) are compositionally biased toward gly residues. Positions 371–411 (PQEKEAIERLKALGFPEGLVIQAYFACEKNENLAANFLLQQ) constitute a UBA 2 domain.

Belongs to the RAD23 family. Component of the XPC complex composed of XPC, RAD23B and CETN2. Interacts with NGLY1 and PSMC1. Interacts with ATXN3. Interacts with AMFR. Interacts with VCP; the interaction is indirect and mediated by NGLY1.

The protein resides in the nucleus. The protein localises to the cytoplasm. In terms of biological role, multiubiquitin chain receptor involved in modulation of proteasomal degradation. Binds to polyubiquitin chains. Proposed to be capable to bind simultaneously to the 26S proteasome and to polyubiquitinated substrates and to deliver ubiquitinated proteins to the proteasome. May play a role in endoplasmic reticulum-associated degradation (ERAD) of misfolded glycoproteins by association with PNGase and delivering deglycosylated proteins to the proteasome. Involved in global genome nucleotide excision repair (GG-NER) by acting as component of the XPC complex. Cooperatively with Cetn2 appears to stabilize Xpc. May protect Xpc from proteasomal degradation. Its function is as follows. The XPC complex is proposed to represent the first factor bound at the sites of DNA damage and together with other core recognition factors, Xpa, RPA and the TFIIH complex, is part of the pre-incision (or initial recognition) complex. The XPC complex recognizes a wide spectrum of damaged DNA characterized by distortions of the DNA helix such as single-stranded loops, mismatched bubbles or single-stranded overhangs. The orientation of XPC complex binding appears to be crucial for inducing a productive NER. XPC complex is proposed to recognize and to interact with unpaired bases on the undamaged DNA strand which is followed by recruitment of the TFIIH complex and subsequent scanning for lesions in the opposite strand in a 5'-to-3' direction by the NER machinery. Cyclobutane pyrimidine dimers (CPDs) which are formed upon UV-induced DNA damage esacpe detection by the XPC complex due to a low degree of structural perurbation. Instead they are detected by the UV-DDB complex which in turn recruits and cooperates with the XPC complex in the respective DNA repair. In vitro, the Xpc:Rad23b dimer is sufficient to initiate NER; it preferentially binds to cisplatin and UV-damaged double-stranded DNA and also binds to a variety of chemically and structurally diverse DNA adducts. Xpc:Rad23b contacts DNA both 5' and 3' of a cisplatin lesion with a preference for the 5' side. Xpc:Rad23bB induces a bend in DNA upon binding. Xpc:Rad23b stimulates the activity of DNA glycosylases Tdg and Smug1. This Mus musculus (Mouse) protein is UV excision repair protein RAD23 homolog B (Rad23b).